The chain runs to 480 residues: Proline--tRNA ligase (480 aa).

It belongs to the class-II aminoacyl-tRNA synthetase family. ProS type 3 subfamily. In terms of assembly, homodimer.

The protein resides in the cytoplasm. It carries out the reaction tRNA(Pro) + L-proline + ATP = L-prolyl-tRNA(Pro) + AMP + diphosphate. Its function is as follows. Catalyzes the attachment of proline to tRNA(Pro) in a two-step reaction: proline is first activated by ATP to form Pro-AMP and then transferred to the acceptor end of tRNA(Pro). The polypeptide is Proline--tRNA ligase (Chloroflexus aggregans (strain MD-66 / DSM 9485)).